We begin with the raw amino-acid sequence, 209 residues long: Large ribosomal subunit protein uL3 (209 aa).

Gln-150 carries the N5-methylglutamine modification.

It belongs to the universal ribosomal protein uL3 family. As to quaternary structure, part of the 50S ribosomal subunit. Forms a cluster with proteins L14 and L19. Methylated by PrmB.

Its function is as follows. One of the primary rRNA binding proteins, it binds directly near the 3'-end of the 23S rRNA, where it nucleates assembly of the 50S subunit. The sequence is that of Large ribosomal subunit protein uL3 from Vibrio campbellii (strain ATCC BAA-1116).